A 211-amino-acid chain; its full sequence is Lipoprotein signal peptidase (211 aa).

A run of 3 helical transmembrane segments spans residues 12–32, 96–116, and 127–147; these read LLAL…YLAV, AFRN…ILHY, and LQVA…DRLA. Catalysis depends on residues Asp-153 and Asp-174. A helical transmembrane segment spans residues 167 to 187; sequence WPTFNIADSLIVVGVALLVLH.

It belongs to the peptidase A8 family.

The protein localises to the cell inner membrane. The enzyme catalyses Release of signal peptides from bacterial membrane prolipoproteins. Hydrolyzes -Xaa-Yaa-Zaa-|-(S,diacylglyceryl)Cys-, in which Xaa is hydrophobic (preferably Leu), and Yaa (Ala or Ser) and Zaa (Gly or Ala) have small, neutral side chains.. It participates in protein modification; lipoprotein biosynthesis (signal peptide cleavage). Functionally, this protein specifically catalyzes the removal of signal peptides from prolipoproteins. The protein is Lipoprotein signal peptidase of Anaeromyxobacter sp. (strain Fw109-5).